A 260-amino-acid polypeptide reads, in one-letter code: MVLIRVLANLLILQLSYAQKSSELVIGGDECNINEHRFLVALYDVSSGDFRGSGTLINPEWVLTAAHCETEEMKLQFGLHSKRVPNKDKQTRVSKEKFFCESNENYTKWNKDIMLIKLNRPVKNSAHIEPLSLPSSPPSVGSVCRIMGWGTLSDTEMILPDVPHCANINLLNYSDCQAAYPELPAKSRTLCAGILEGGKDTCSGDSGGPLICNGTFQGIASWGGTLCGYVREPGSYTKVFDHLDWIQSIIAGNTNVTCPL.

The signal sequence occupies residues 1–18 (MVLIRVLANLLILQLSYA). Positions 19–24 (QKSSEL) are excised as a propeptide. Residues 25–251 (VIGGDECNIN…HLDWIQSIIA (227 aa)) enclose the Peptidase S1 domain. 5 disulfides stabilise this stretch: Cys-31–Cys-165, Cys-100–Cys-258, Cys-144–Cys-212, Cys-176–Cys-191, and Cys-202–Cys-227. Catalysis depends on His-67, which acts as the Charge relay system. An N-linked (GlcNAc...) asparagine glycan is attached at Asn-105. Asp-112 (charge relay system) is an active-site residue. Asn-172 carries N-linked (GlcNAc...) asparagine glycosylation. Ser-206 serves as the catalytic Charge relay system. 2 N-linked (GlcNAc...) asparagine glycosylation sites follow: Asn-213 and Asn-255.

Belongs to the peptidase S1 family. Snake venom subfamily. In terms of assembly, monomer. Expressed by the venom gland.

It localises to the secreted. Snake venom serine protease that may act in the hemostasis system of the prey. The polypeptide is Snake venom serine protease KN14 (Trimeresurus stejnegeri (Chinese green tree viper)).